The following is a 164-amino-acid chain: MEMTNAQRLILSNQYKMMTMLDPDNAERYRRLQTIIERGYGLQMRELDREFGELTEEVCRTIINIMEMHHALQVSWTNLKDKQDLDERRLTFLGFDAATEARYLGFVRFMVHVEGRYPHFDAGTHGFNAQTKMWEKYNRMLAVWQSCPRQYHLSAVEIAQIINA.

The protein belongs to the UPF0304 family.

The sequence is that of UPF0304 protein PC1_2778 from Pectobacterium carotovorum subsp. carotovorum (strain PC1).